Reading from the N-terminus, the 198-residue chain is TATA-box-binding protein (198 aa).

A run of 2 repeats spans residues 15 to 91 and 106 to 182.

It belongs to the TBP family.

Functionally, general factor that plays a role in the activation of archaeal genes transcribed by RNA polymerase. Binds specifically to the TATA box promoter element which lies close to the position of transcription initiation. The sequence is that of TATA-box-binding protein (tbp) from Sulfurisphaera tokodaii (strain DSM 16993 / JCM 10545 / NBRC 100140 / 7) (Sulfolobus tokodaii).